A 95-amino-acid chain; its full sequence is Small ribosomal subunit protein uS19 (95 aa).

This sequence belongs to the universal ribosomal protein uS19 family.

Protein S19 forms a complex with S13 that binds strongly to the 16S ribosomal RNA. The chain is Small ribosomal subunit protein uS19 from Thermotoga sp. (strain RQ2).